We begin with the raw amino-acid sequence, 340 residues long: Ketol-acid reductoisomerase (NADP(+)) (340 aa).

In terms of domain architecture, KARI N-terminal Rossmann spans 3–183 (VNIYYDKDCD…GGGRTGIIET (181 aa)). Residues 26–29 (FGSQ), serine 54, and 84–87 (DELQ) contribute to the NADP(+) site. Histidine 109 is a catalytic residue. Glycine 135 is an NADP(+) binding site. Residues 184–329 (TFKDETETDL…KKLRAMMPWI (146 aa)) form the KARI C-terminal knotted domain. Positions 192, 196, 228, and 232 each coordinate Mg(2+). Residue serine 253 coordinates substrate.

It belongs to the ketol-acid reductoisomerase family. Requires Mg(2+) as cofactor.

The enzyme catalyses (2R)-2,3-dihydroxy-3-methylbutanoate + NADP(+) = (2S)-2-acetolactate + NADPH + H(+). The catalysed reaction is (2R,3R)-2,3-dihydroxy-3-methylpentanoate + NADP(+) = (S)-2-ethyl-2-hydroxy-3-oxobutanoate + NADPH + H(+). It functions in the pathway amino-acid biosynthesis; L-isoleucine biosynthesis; L-isoleucine from 2-oxobutanoate: step 2/4. Its pathway is amino-acid biosynthesis; L-valine biosynthesis; L-valine from pyruvate: step 2/4. Its function is as follows. Involved in the biosynthesis of branched-chain amino acids (BCAA). Catalyzes an alkyl-migration followed by a ketol-acid reduction of (S)-2-acetolactate (S2AL) to yield (R)-2,3-dihydroxy-isovalerate. In the isomerase reaction, S2AL is rearranged via a Mg-dependent methyl migration to produce 3-hydroxy-3-methyl-2-ketobutyrate (HMKB). In the reductase reaction, this 2-ketoacid undergoes a metal-dependent reduction by NADPH to yield (R)-2,3-dihydroxy-isovalerate. This is Ketol-acid reductoisomerase (NADP(+)) from Campylobacter curvus (strain 525.92).